The primary structure comprises 146 residues: DNA-directed RNA polymerases II, IV and V subunit 8B (146 aa).

It belongs to the eukaryotic RPB8 RNA polymerase subunit family. As to quaternary structure, component of the RNA polymerase II, IV and V complexes. Associates with the mediator complex.

It localises to the nucleus. DNA-dependent RNA polymerase catalyzes the transcription of DNA into RNA using the four ribonucleoside triphosphates as substrates. Component of RNA polymerase II which synthesizes mRNA precursors and many functional non-coding RNAs. Pol II is the central component of the basal RNA polymerase II transcription machinery. It is composed of mobile elements that move relative to each other. Component of RNA polymerases IV and V which mediate short-interfering RNAs (siRNA) accumulation and subsequent RNA-directed DNA methylation-dependent (RdDM) transcriptional gene silencing (TGS) of endogenous repeated sequences, including transposable elements. The sequence is that of DNA-directed RNA polymerases II, IV and V subunit 8B (NRPB8B) from Arabidopsis thaliana (Mouse-ear cress).